A 229-amino-acid polypeptide reads, in one-letter code: Potassium/proton antiporter CemA (229 aa).

Transmembrane regions (helical) follow at residues 7 to 27 (FTPLLYLVSIVFLPWWLSLSF), 114 to 134 (IICFVILSGFSILGNEELVIL), 154 to 174 (ILLLTDLCIGFHSPHGWELMV), and 189 to 209 (IISGLVSTFPVILDTIFKYWI).

This sequence belongs to the CemA family.

Its subcellular location is the plastid. It is found in the chloroplast inner membrane. It carries out the reaction K(+)(in) + H(+)(out) = K(+)(out) + H(+)(in). Contributes to K(+)/H(+) antiport activity by supporting proton efflux to control proton extrusion and homeostasis in chloroplasts in a light-dependent manner to modulate photosynthesis. Prevents excessive induction of non-photochemical quenching (NPQ) under continuous-light conditions. Indirectly promotes efficient inorganic carbon uptake into chloroplasts. The protein is Potassium/proton antiporter CemA of Coffea arabica (Arabian coffee).